The chain runs to 472 residues: Glycosyl hydrolase family 109 protein (472 aa).

The segment at residues 1-35 (MSQTPAVSRRLLLGSAAATGALATGIGSAAPVAAA) is a signal peptide (tat-type signal). Residues 68–69 (NR), D90, 139–142 (WEFH), H145, 159–160 (EL), and N188 contribute to the NAD(+) site. Substrate contacts are provided by residues Y217, R236, 248–251 (YPMH), and Y330. Residue Y248 participates in NAD(+) binding.

The protein belongs to the Gfo/Idh/MocA family. Glycosyl hydrolase 109 subfamily. It depends on NAD(+) as a cofactor. Predicted to be exported by the Tat system. The position of the signal peptide cleavage has not been experimentally proven.

Functionally, glycosidase. Has no alpha-N-acetylgalactosaminidase activity. This Streptomyces coelicolor (strain ATCC BAA-471 / A3(2) / M145) protein is Glycosyl hydrolase family 109 protein.